A 234-amino-acid polypeptide reads, in one-letter code: Putative ankyrin repeat protein RF_0063 (234 aa).

2 ANK repeats span residues 149 to 180 (NNNT…TISI) and 184 to 213 (YNNT…QKAL).

The sequence is that of Putative ankyrin repeat protein RF_0063 from Rickettsia felis (strain ATCC VR-1525 / URRWXCal2) (Rickettsia azadi).